The sequence spans 98 residues: Ferredoxin-like protein (98 aa).

Residues G57–P87 enclose the 4Fe-4S ferredoxin-type domain.

To ferredoxins from P.putida and C.tartarivorum, ferredoxin I from A.vinelandii, ferredoxin II from D.desulfuricans.

In terms of biological role, could be a 3Fe-4S cluster-containing protein. The sequence is that of Ferredoxin-like protein (fixX) from Rhizobium meliloti (strain 1021) (Ensifer meliloti).